Consider the following 74-residue polypeptide: Cyclin-dependent kinases regulatory subunit (74 aa).

The protein belongs to the CKS family. In terms of assembly, forms a homohexamer that can probably bind six kinase subunits.

Its function is as follows. Binds to the catalytic subunit of the cyclin dependent kinases Cdk1 and Cdk2, and is essential for their biological function. The protein is Cyclin-dependent kinases regulatory subunit (Cks30A) of Drosophila melanogaster (Fruit fly).